Here is a 465-residue protein sequence, read N- to C-terminus: Sperm microtubule associated protein 2-like (465 aa).

Positions 1–29 are enriched in polar residues; that stretch reads MENQEFLSSSAPSEVTDGQVSTEISTCSE. Residues 1–140 are disordered; sequence MENQEFLSSS…REAKETELLP (140 aa). Composition is skewed to basic and acidic residues over residues 40 to 70 and 114 to 137; these read LDTH…QDQR and KARE…KETE. THEG repeat units follow at residues 174–192, 214–233, 260–279, 297–316, 333–352, 373–392, 409–428, and 446–465; these read RKCF…PKKQ, GALK…PKEV, PALF…PNGF, SLRI…AKGT, STLS…PRIK, AAMI…SKSV, ATTH…PNKR, and AALK…PLTR.

The polypeptide is Sperm microtubule associated protein 2-like (Homo sapiens (Human)).